Reading from the N-terminus, the 267-residue chain is Cyclin-C (267 aa).

Positions 48–151 (IQVLGEQLKL…LLENLDCCLI (104 aa)) constitute a Cyclin N-terminal domain.

This sequence belongs to the cyclin family. Cyclin C subfamily. Component of the Cdk8 module of the Mediator complex, composed of CycC, Cdk8, kto and skd.

The protein resides in the nucleus. Its function is as follows. Component of the Mediator complex, a coactivator involved in regulated gene transcription of nearly all RNA polymerase II-dependent genes. Mediator functions as a bridge to convey information from gene-specific regulatory proteins to the basal RNA polymerase II transcription machinery. Mediator is recruited to promoters by direct interactions with regulatory proteins and serves as a scaffold for the assembly of a functional preinitiation complex with RNA polymerase II and the general transcription factors. Binds to and activates cyclin-dependent kinase Cdk8 that phosphorylates the CTD (C-terminal domain) of the large subunit of RNA polymerase II (RNAp II), which may inhibit the formation of a transcription initiation complex. Required for leg and eye development and macrochaete specification or differentiation. The chain is Cyclin-C (CycC) from Drosophila melanogaster (Fruit fly).